The sequence spans 374 residues: Spore germination protein B3 (374 aa).

The signal sequence occupies residues 1 to 19 (MKTASKFSVMFFMLLALCG). C20 carries N-palmitoyl cysteine lipidation. C20 carries S-diacylglycerol cysteine lipidation.

The protein belongs to the GerABKC lipoprotein family.

Its subcellular location is the cell membrane. Functionally, involved in the response to the germinative mixture of L-asparagine, glucose, fructose and potassium ions (AGFK). Cannot stimulate germination in the absence of gerD and gerK gene products (fructose and glucose receptors respectively). The polypeptide is Spore germination protein B3 (gerBC) (Bacillus subtilis (strain 168)).